The chain runs to 215 residues: 3-demethoxyubiquinol 3-hydroxylase (215 aa).

Residues E64, E94, H97, E146, E178, and H181 each coordinate Fe cation.

It belongs to the COQ7 family. The cofactor is Fe cation.

It is found in the cell membrane. The enzyme catalyses a 5-methoxy-2-methyl-3-(all-trans-polyprenyl)benzene-1,4-diol + AH2 + O2 = a 3-demethylubiquinol + A + H2O. The protein operates within cofactor biosynthesis; ubiquinone biosynthesis. Catalyzes the hydroxylation of 2-nonaprenyl-3-methyl-6-methoxy-1,4-benzoquinol during ubiquinone biosynthesis. This Pseudomonas savastanoi pv. phaseolicola (strain 1448A / Race 6) (Pseudomonas syringae pv. phaseolicola (strain 1448A / Race 6)) protein is 3-demethoxyubiquinol 3-hydroxylase.